The sequence spans 205 residues: CASP-like protein 0U1 (205 aa).

Residues methionine 1 to lysine 38 are Cytoplasmic-facing. Residues phenylalanine 39–alanine 57 traverse the membrane as a helical segment. At lysine 58–glycine 89 the chain is on the extracellular side. Residues valine 90–isoleucine 110 traverse the membrane as a helical segment. The Cytoplasmic portion of the chain corresponds to arginine 111–alanine 124. The chain crosses the membrane as a helical span at residues leucine 125–valine 145. Residues leucine 146–serine 159 lie on the Extracellular side of the membrane. The chain crosses the membrane as a helical span at residues leucine 160 to alanine 180. Topologically, residues tryptophan 181 to glycine 205 are cytoplasmic.

Belongs to the Casparian strip membrane proteins (CASP) family. In terms of assembly, homodimer and heterodimers.

The protein localises to the cell membrane. The polypeptide is CASP-like protein 0U1 (Ostreococcus lucimarinus (strain CCE9901)).